The sequence spans 142 residues: Large ribosomal subunit protein uL11 (142 aa).

This sequence belongs to the universal ribosomal protein uL11 family. As to quaternary structure, part of the ribosomal stalk of the 50S ribosomal subunit. Interacts with L10 and the large rRNA to form the base of the stalk. L10 forms an elongated spine to which L12 dimers bind in a sequential fashion forming a multimeric L10(L12)X complex. In terms of processing, one or more lysine residues are methylated.

In terms of biological role, forms part of the ribosomal stalk which helps the ribosome interact with GTP-bound translation factors. The chain is Large ribosomal subunit protein uL11 from Thermobifida fusca (strain YX).